A 572-amino-acid chain; its full sequence is Proline--tRNA ligase (572 aa).

It belongs to the class-II aminoacyl-tRNA synthetase family. ProS type 1 subfamily. Homodimer.

Its subcellular location is the cytoplasm. The catalysed reaction is tRNA(Pro) + L-proline + ATP = L-prolyl-tRNA(Pro) + AMP + diphosphate. In terms of biological role, catalyzes the attachment of proline to tRNA(Pro) in a two-step reaction: proline is first activated by ATP to form Pro-AMP and then transferred to the acceptor end of tRNA(Pro). As ProRS can inadvertently accommodate and process non-cognate amino acids such as alanine and cysteine, to avoid such errors it has two additional distinct editing activities against alanine. One activity is designated as 'pretransfer' editing and involves the tRNA(Pro)-independent hydrolysis of activated Ala-AMP. The other activity is designated 'posttransfer' editing and involves deacylation of mischarged Ala-tRNA(Pro). The misacylated Cys-tRNA(Pro) is not edited by ProRS. The sequence is that of Proline--tRNA ligase from Escherichia coli O17:K52:H18 (strain UMN026 / ExPEC).